Here is a 122-residue protein sequence, read N- to C-terminus: Large ribosomal subunit protein uL14 (122 aa).

This sequence belongs to the universal ribosomal protein uL14 family. As to quaternary structure, part of the 50S ribosomal subunit. Forms a cluster with proteins L3 and L19. In the 70S ribosome, L14 and L19 interact and together make contacts with the 16S rRNA in bridges B5 and B8.

Binds to 23S rRNA. Forms part of two intersubunit bridges in the 70S ribosome. This chain is Large ribosomal subunit protein uL14, found in Chlamydia abortus (strain DSM 27085 / S26/3) (Chlamydophila abortus).